The chain runs to 86 residues: Short neurotoxin homolog NTL4 (86 aa).

A signal peptide spans 1 to 21 (MKTLLLTLVVVTIICLDLGYT). 4 disulfide bridges follow: cysteine 24–cysteine 45, cysteine 38–cysteine 63, cysteine 67–cysteine 78, and cysteine 79–cysteine 84.

The protein belongs to the three-finger toxin family. Short-chain subfamily. Orphan group III sub-subfamily. Expressed by the venom gland.

It localises to the secreted. In Bungarus multicinctus (Many-banded krait), this protein is Short neurotoxin homolog NTL4.